A 123-amino-acid chain; its full sequence is Small ribosomal subunit protein uS12 (123 aa).

The segment at 1 to 21 (MPTIEQLVRKGRQAKPKKSKT) is disordered. A compositionally biased stretch (basic residues) spans 9-20 (RKGRQAKPKKSK). At D89 the chain carries 3-methylthioaspartic acid.

This sequence belongs to the universal ribosomal protein uS12 family. In terms of assembly, part of the 30S ribosomal subunit. Contacts proteins S8 and S17. May interact with IF1 in the 30S initiation complex.

With S4 and S5 plays an important role in translational accuracy. In terms of biological role, interacts with and stabilizes bases of the 16S rRNA that are involved in tRNA selection in the A site and with the mRNA backbone. Located at the interface of the 30S and 50S subunits, it traverses the body of the 30S subunit contacting proteins on the other side and probably holding the rRNA structure together. The combined cluster of proteins S8, S12 and S17 appears to hold together the shoulder and platform of the 30S subunit. This chain is Small ribosomal subunit protein uS12, found in Bifidobacterium longum subsp. infantis (strain ATCC 15697 / DSM 20088 / JCM 1222 / NCTC 11817 / S12).